The sequence spans 611 residues: Protein spaetzle 3 (611 aa).

A signal peptide spans 1 to 14; that stretch reads MALTNFSLPFGALG. N5 is a glycosylation site (N-linked (GlcNAc...) asparagine). The tract at residues 57–322 is disordered; sequence EYFKNNPYAP…NDKSNNNQMP (266 aa). Low complexity-rich tracts occupy residues 104–120, 127–153, and 169–185; these read QQVQ…QHQQ, SVSF…LTQT, and PGQQ…QQKQ. Residues 191–210 are compositionally biased toward polar residues; that stretch reads GSASATFTKNSGSFSITSFG. Pro residues predominate over residues 218-239; it reads PPQPQQPPPSQQQQPPPAPPPQ. Acidic residues predominate over residues 288-306; the sequence is YDVEEGEEDEEEDGEEEGQ. 2 N-linked (GlcNAc...) asparagine glycosylation sites follow: N335 and N351. The disordered stretch occupies residues 477–518; the sequence is KKRQAAAGGSRNRGGSAGGSGNGNTNANRQPGNKNGSSGTGR. Residues 487–498 show a composition bias toward gly residues; it reads RNRGGSAGGSGN. N-linked (GlcNAc...) asparagine glycosylation occurs at N511. Residues 521–609 enclose the Spaetzle domain; sequence ACESKIEIVT…LFPSCCVCRC (89 aa). 3 cysteine pairs are disulfide-bonded: C522-C573, C559-C605, and C567-C607.

Homodimer; disulfide-linked.

In terms of biological role, neurotrophin which may function as a ligand to the Toll-related receptor Tollo. Involved in a Tollo and JNK signaling pathway that positively regulates neuromuscular junction (NMJ) growth in presynaptic motorneurons. May function by activating Tollo to promote the phosphorylation of JNK. The sequence is that of Protein spaetzle 3 from Drosophila melanogaster (Fruit fly).